Reading from the N-terminus, the 701-residue chain is Kinesin-like protein KIN-10C (701 aa).

One can recognise a Kinesin motor domain in the interval 8–318 (VVRVVARVKP…LNLASRICLG (311 aa)). Position 94–101 (94–101 (GARNSGKT)) interacts with ATP.

The protein belongs to the TRAFAC class myosin-kinesin ATPase superfamily. Kinesin family. KIN-10 subfamily.

The sequence is that of Kinesin-like protein KIN-10C from Arabidopsis thaliana (Mouse-ear cress).